A 153-amino-acid polypeptide reads, in one-letter code: Endoribonuclease YbeY (153 aa).

3 residues coordinate Zn(2+): H112, H116, and H122.

The protein belongs to the endoribonuclease YbeY family. Zn(2+) serves as cofactor.

It is found in the cytoplasm. Single strand-specific metallo-endoribonuclease involved in late-stage 70S ribosome quality control and in maturation of the 3' terminus of the 16S rRNA. The polypeptide is Endoribonuclease YbeY (Persephonella marina (strain DSM 14350 / EX-H1)).